Consider the following 147-residue polypeptide: Large ribosomal subunit protein uL13 (147 aa).

The disordered stretch occupies residues 127–147 (GPEHPHSAQQPKVLEIQGAAR).

This sequence belongs to the universal ribosomal protein uL13 family. As to quaternary structure, part of the 50S ribosomal subunit.

Functionally, this protein is one of the early assembly proteins of the 50S ribosomal subunit, although it is not seen to bind rRNA by itself. It is important during the early stages of 50S assembly. This Verminephrobacter eiseniae (strain EF01-2) protein is Large ribosomal subunit protein uL13.